A 125-amino-acid chain; its full sequence is Large ribosomal subunit protein bL12 (125 aa).

It belongs to the bacterial ribosomal protein bL12 family. Homodimer. Part of the ribosomal stalk of the 50S ribosomal subunit. Forms a multimeric L10(L12)X complex, where L10 forms an elongated spine to which 2 to 4 L12 dimers bind in a sequential fashion. Binds GTP-bound translation factors.

Its function is as follows. Forms part of the ribosomal stalk which helps the ribosome interact with GTP-bound translation factors. Is thus essential for accurate translation. This is Large ribosomal subunit protein bL12 from Caldanaerobacter subterraneus subsp. tengcongensis (strain DSM 15242 / JCM 11007 / NBRC 100824 / MB4) (Thermoanaerobacter tengcongensis).